A 282-amino-acid chain; its full sequence is Large ribosomal subunit protein uL2 (282 aa).

The segment at 215-282 (RHKGIRPTVR…IIRSRKETKK (68 aa)) is disordered. Residues 263–282 (RNPKKPSTKLIIRSRKETKK) are compositionally biased toward basic residues.

The protein belongs to the universal ribosomal protein uL2 family. As to quaternary structure, part of the 50S ribosomal subunit. Forms a bridge to the 30S subunit in the 70S ribosome.

In terms of biological role, one of the primary rRNA binding proteins. Required for association of the 30S and 50S subunits to form the 70S ribosome, for tRNA binding and peptide bond formation. It has been suggested to have peptidyltransferase activity; this is somewhat controversial. Makes several contacts with the 16S rRNA in the 70S ribosome. This chain is Large ribosomal subunit protein uL2, found in Mesomycoplasma hyopneumoniae (strain 7448) (Mycoplasma hyopneumoniae).